A 304-amino-acid chain; its full sequence is Protein BOBBER 1 (304 aa).

Position 2 is an N-acetylalanine (Ala-2). Positions 54 to 106 (EDEIVVAVRAAKEKLKKAEKKKAEKESVKPVEKKAEKEIVKLVEKKVEKESVK) form a coiled coil. The disordered stretch occupies residues 111-141 (ASSAEPIEVEKPKEEEEKKESGPIVPNKGNG). Basic and acidic residues predominate over residues 118–131 (EVEKPKEEEEKKES). The CS domain occupies 142–231 (TDLENYSWIQ…DQMEWWKCCV (90 aa)).

In terms of tissue distribution, expressed in all seedling tissues with highest expression levels at the root tip.

It is found in the cytoplasm. It localises to the cytoplasmic granule. Its function is as follows. Small heat shock protein required for the establishment of auxin gradients and for patterning of the apical domain of the embryo. Involved in the specification of the cotyledon primordia. Also required for normal inflorescence and floral meristem function, normal developmental patterning and thermotolerance. Acts as a molecular chaperone. The polypeptide is Protein BOBBER 1 (BOB1) (Arabidopsis thaliana (Mouse-ear cress)).